A 387-amino-acid chain; its full sequence is GTPase Obg (387 aa).

Residues 1–159 enclose the Obg domain; the sequence is MKFVDEVEIR…RSLKLELLLL (159 aa). Residues 160–333 enclose the OBG-type G domain; that stretch reads ADVGLLGLPN…LTQKVMTFIE (174 aa). Residues 166-173, 191-195, 213-216, 283-286, and 314-316 contribute to the GTP site; these read GLPNAGKS, FTTLV, DIPG, NKLD, and SAF. Ser-173 and Thr-193 together coordinate Mg(2+). The interval 361 to 387 is disordered; it reads AAHSQDDDLDDDDWDEDDYDVEVEYRQ. The span at 367-387 shows a compositional bias: acidic residues; it reads DDLDDDDWDEDDYDVEVEYRQ.

This sequence belongs to the TRAFAC class OBG-HflX-like GTPase superfamily. OBG GTPase family. Monomer. The cofactor is Mg(2+).

Its subcellular location is the cytoplasm. In terms of biological role, an essential GTPase which binds GTP, GDP and possibly (p)ppGpp with moderate affinity, with high nucleotide exchange rates and a fairly low GTP hydrolysis rate. Plays a role in control of the cell cycle, stress response, ribosome biogenesis and in those bacteria that undergo differentiation, in morphogenesis control. This chain is GTPase Obg, found in Colwellia psychrerythraea (strain 34H / ATCC BAA-681) (Vibrio psychroerythus).